A 1184-amino-acid chain; its full sequence is MQKLIERLDFGKIKARGEMPHFLEFQLNSYEDFLQTNMSPNKREEKGFELAFKEIFPIESSNGDVRLEYIGYELHEAEAPLNDELECKKRGKTYSNSLKVRLRLINKKMGNEIQESLVYFGEVPKMTDRATFIINGAERVVVSQLHRSPGVSFSKEVNTQTGKDLFSGKIIPYKGTWLEFETDKNDFLSVKIDRKKKVLATVFLKAVDFFKDNNEIRDYFLEVKELKLKALYKKYSKEPEELLNVLKQELDGSIVKEDILDEETGEFIAEAEAFINEEVINKLIENKVDKISYWYVGPESKLVANTLMNDTTLTEDEAVVEVFKKLRPGDQVTVDSARSLIRQMFFNPQRYDLEPVGRYKMNKRLKLDVPEEQISLTKEDVLGTIKYVIELNNGEQNVHTDDIDNLSNRRIRGVGELLLMQIKTGLAKMNKMVREKMTTQDIETVTPQSLLNTRPLNALIQDFFGSGQLSQFMDQSNPLAELTHKRRISALGPGGLSRERAGFEVRDVHDSHYGRICPIETPEGPNIGLIGSLATYAKINKYGFIETPYVKVENGVALVDDVRYLAADEEDGLFIAQADTKLDKNNKLQGLVVCRYGHEIVEIEPERVNYMDVSPKQVVSVSAGLIPFLEHDDANRALMGSNMQRQAVPLLKSEAPFIGTGLERKVAVDSGAVVTTKVSGKVTYVDGKKIIIEDKDKKEHIYRLLNYERSNQSMCLHQTPLVDLGDKVKAGDIIADGPATKLGDLSLGRNILMGFMPWEGYNYEDAILISDRLRKDDVFTSIHIEEYEIDARTTKLGDEEITREIPNVSESALRNLDENGVIMIGSEVGPGDILVGKTAPKGETEPPAEEKLLRAIFGEKARDVRDTSLTMPHGSKGVVVDILELSRENGDELKAGVNKSIRVLVAEKRKITVGDKMSGRHGNKGVVSRVLPAEDMPFLEDGTHLDVVLNPLGVPSRMNIGQVLEVHLGMAMRTLNGGTCIATPVFDGATEEQVKDYLEKQGYPRTGKVTLYDGRTGEKFDNKVTVGIMYMLKLHHLVEDKMHARAIGPYSLVTQQPLGGKAQFGGQRLGEMEVWALEAYGASNILQEMLTVKSDDITGRTKTYEAIIKGEAMPESDLPESFKVLLKEFQALALDIELCDEEDNVINVDEEIGIEETPTEYSPQYEIEMTGLHEIDEDAEDFEE.

Belongs to the RNA polymerase beta chain family. As to quaternary structure, the RNAP catalytic core consists of 2 alpha, 1 beta, 1 beta' and 1 omega subunit. When a sigma factor is associated with the core the holoenzyme is formed, which can initiate transcription.

It catalyses the reaction RNA(n) + a ribonucleoside 5'-triphosphate = RNA(n+1) + diphosphate. Its function is as follows. DNA-dependent RNA polymerase catalyzes the transcription of DNA into RNA using the four ribonucleoside triphosphates as substrates. This chain is DNA-directed RNA polymerase subunit beta, found in Fusobacterium nucleatum subsp. nucleatum (strain ATCC 25586 / DSM 15643 / BCRC 10681 / CIP 101130 / JCM 8532 / KCTC 2640 / LMG 13131 / VPI 4355).